We begin with the raw amino-acid sequence, 366 residues long: Ferredoxin--NADP reductase, leaf isozyme 2, chloroplastic (366 aa).

The N-terminal 48 residues, M1–R48, are a transit peptide targeting the chloroplast. The FAD-binding FR-type domain maps to K87–M209. Residues R145–S148, C166–K168, Y172, and V183–S185 each bind FAD. NADP(+) is bound by residues S148 and K168. The cysteines at positions 184 and 189 are disulfide-linked. Phosphoserine is present on S185. T216 is subject to Phosphothreonine. T224 serves as a coordination point for FAD. NADP(+)-binding positions include T224, V256–P257, S286–R287, K296, G325–L326, and E364.

It belongs to the ferredoxin--NADP reductase type 1 family. As to quaternary structure, heterodimer with LFNR1. Component of high molecular weight thylakoid LFNRs-containing protein complexes containing LIR1, LFNR1, LFNR2, TIC62 and TROL proteins. Interacts directly with LFNR1 and LFNR2; LIR1 increases the affinity of LFNR1 and LFNR2 for TIC62 and subsequent thylakoid relocalization. Requires FAD as cofactor. Post-translationally, may form interchain disulfide bonds with LIR1.

Its subcellular location is the plastid. The protein resides in the chloroplast stroma. It localises to the chloroplast thylakoid membrane. It catalyses the reaction 2 reduced [2Fe-2S]-[ferredoxin] + NADP(+) + H(+) = 2 oxidized [2Fe-2S]-[ferredoxin] + NADPH. It functions in the pathway energy metabolism; photosynthesis. Its function is as follows. Plays a key role in regulating the relative amounts of cyclic and non-cyclic electron flow to meet the demands of the plant for ATP and reducing power. The polypeptide is Ferredoxin--NADP reductase, leaf isozyme 2, chloroplastic (Oryza sativa subsp. indica (Rice)).